The following is a 367-amino-acid chain: Developmentally-regulated GTP-binding protein 1 (367 aa).

Positions 2–16 (SGTLARIAEIEAEMA) are required for interaction with STK16. The region spanning 65 to 290 (ARIGFVGFPS…LLEKIWDYLQ (226 aa)) is the OBG-type G domain. GTP contacts are provided by residues 71-78 (GFPSVGKS), 96-100 (FTTLT), 117-120 (DLPG), 248-251 (NKID), and 271-273 (SAH). Ser78 and Thr98 together coordinate Mg(2+). A TGS domain is found at 290–366 (QLVRIYTKPK…EDEDVIQIVK (77 aa)).

It belongs to the TRAFAC class OBG-HflX-like GTPase superfamily. OBG GTPase family. The cofactor is Mg(2+). K(+) serves as cofactor. Expressed in many adult amd embryonic tissues. In adults, highest levels in ovaries and testes, followed by skeletal muscle, stomach, brain, kidney and liver. Weak expression in heart and brain.

It localises to the nucleus. The protein localises to the cytoplasm. The enzyme catalyses GTP + H2O = GDP + phosphate + H(+). Functionally, catalyzes the conversion of GTP to GDP through hydrolysis of the gamma-phosphate bond in GTP. Binds to microtubules and promotes microtubule polymerization and bundling. GTPase activity is not necessary for these microtubule-related functions. The polypeptide is Developmentally-regulated GTP-binding protein 1 (drg1) (Xenopus laevis (African clawed frog)).